Here is a 361-residue protein sequence, read N- to C-terminus: Phosphoserine aminotransferase (361 aa).

Residue Arg42 coordinates L-glutamate. Pyridoxal 5'-phosphate-binding positions include 76 to 77, Trp102, Thr154, Asp173, and Gln196; that span reads GR. An N6-(pyridoxal phosphate)lysine modification is found at Lys197. 238-239 contributes to the pyridoxal 5'-phosphate binding site; sequence NT.

Belongs to the class-V pyridoxal-phosphate-dependent aminotransferase family. SerC subfamily. As to quaternary structure, homodimer. The cofactor is pyridoxal 5'-phosphate.

Its subcellular location is the cytoplasm. It carries out the reaction O-phospho-L-serine + 2-oxoglutarate = 3-phosphooxypyruvate + L-glutamate. The enzyme catalyses 4-(phosphooxy)-L-threonine + 2-oxoglutarate = (R)-3-hydroxy-2-oxo-4-phosphooxybutanoate + L-glutamate. The protein operates within amino-acid biosynthesis; L-serine biosynthesis; L-serine from 3-phospho-D-glycerate: step 2/3. Its pathway is cofactor biosynthesis; pyridoxine 5'-phosphate biosynthesis; pyridoxine 5'-phosphate from D-erythrose 4-phosphate: step 3/5. In terms of biological role, catalyzes the reversible conversion of 3-phosphohydroxypyruvate to phosphoserine and of 3-hydroxy-2-oxo-4-phosphonooxybutanoate to phosphohydroxythreonine. The chain is Phosphoserine aminotransferase from Idiomarina loihiensis (strain ATCC BAA-735 / DSM 15497 / L2-TR).